The primary structure comprises 585 residues: Arginine--tRNA ligase (585 aa).

The short motif at 126 to 136 is the 'HIGH' region element; that stretch reads PNIAKEMHVGH.

This sequence belongs to the class-I aminoacyl-tRNA synthetase family. Monomer.

The protein resides in the cytoplasm. The catalysed reaction is tRNA(Arg) + L-arginine + ATP = L-arginyl-tRNA(Arg) + AMP + diphosphate. The protein is Arginine--tRNA ligase of Trichodesmium erythraeum (strain IMS101).